A 442-amino-acid polypeptide reads, in one-letter code: Phosphoglucosamine mutase (442 aa).

The active-site Phosphoserine intermediate is the Ser-103. Positions 103, 241, 243, and 245 each coordinate Mg(2+). The residue at position 103 (Ser-103) is a Phosphoserine.

The protein belongs to the phosphohexose mutase family. Mg(2+) is required as a cofactor. Activated by phosphorylation.

The catalysed reaction is alpha-D-glucosamine 1-phosphate = D-glucosamine 6-phosphate. Functionally, catalyzes the conversion of glucosamine-6-phosphate to glucosamine-1-phosphate. The protein is Phosphoglucosamine mutase of Deinococcus deserti (strain DSM 17065 / CIP 109153 / LMG 22923 / VCD115).